We begin with the raw amino-acid sequence, 180 residues long: Adenine phosphoribosyltransferase (180 aa).

This sequence belongs to the purine/pyrimidine phosphoribosyltransferase family. In terms of assembly, homodimer.

The protein localises to the cytoplasm. The enzyme catalyses AMP + diphosphate = 5-phospho-alpha-D-ribose 1-diphosphate + adenine. Its pathway is purine metabolism; AMP biosynthesis via salvage pathway; AMP from adenine: step 1/1. Catalyzes a salvage reaction resulting in the formation of AMP, that is energically less costly than de novo synthesis. The sequence is that of Adenine phosphoribosyltransferase from Mannheimia succiniciproducens (strain KCTC 0769BP / MBEL55E).